The sequence spans 133 residues: Small ribosomal subunit protein uS8 (133 aa).

It belongs to the universal ribosomal protein uS8 family. In terms of assembly, part of the 30S ribosomal subunit. Contacts proteins S5 and S12.

In terms of biological role, one of the primary rRNA binding proteins, it binds directly to 16S rRNA central domain where it helps coordinate assembly of the platform of the 30S subunit. In Endomicrobium trichonymphae, this protein is Small ribosomal subunit protein uS8.